Consider the following 72-residue polypeptide: Phaiodotoxin-2 (72 aa).

Positions 1–72 constitute an LCN-type CS-alpha/beta domain; sequence KFIRHKDESF…CFGALESKCA (72 aa). 4 disulfides stabilise this stretch: Cys-13–Cys-38, Cys-23–Cys-50, Cys-27–Cys-52, and Cys-63–Cys-71.

Belongs to the long (4 C-C) scorpion toxin superfamily. Sodium channel inhibitor family. In terms of tissue distribution, expressed by the venom gland.

The protein resides in the secreted. In terms of biological role, sodium channel (Nav) specific neurotoxin. The protein is Phaiodotoxin-2 of Anuroctonus phaiodactylus (Mafia scorpion).